Here is a 272-residue protein sequence, read N- to C-terminus: Pyridoxal phosphate phosphatase YbhA (272 aa).

The active-site Nucleophile is the D9. Position 9 (D9) interacts with Mg(2+). Residue L10 coordinates phosphate. D11 lines the Mg(2+) pocket. Phosphate is bound by residues 43-44 and K200; that span reads TG. D223 lines the Mg(2+) pocket. N226 contributes to the phosphate binding site.

Belongs to the HAD-like hydrolase superfamily. CbbY/CbbZ/Gph/YieH family. It depends on Mg(2+) as a cofactor. Mn(2+) is required as a cofactor. The cofactor is Co(2+). Requires Zn(2+) as cofactor.

The enzyme catalyses pyridoxal 5'-phosphate + H2O = pyridoxal + phosphate. In terms of biological role, catalyzes the dephosphorylation of pyridoxal-phosphate (PLP). Can also hydrolyze erythrose-4-phosphate (Ery4P) and fructose-1,6-bis-phosphate (Fru1,6bisP). This is Pyridoxal phosphate phosphatase YbhA (ybhA) from Escherichia coli (strain K12).